The sequence spans 356 residues: Protein ATP1B4 (356 aa).

At 1–109 (MRRQLRSRRA…SLARTGQSRS (109 aa)) the chain is on the nuclear side. A disordered region spans residues 32 to 77 (LADEEEEAEEEAQVMMVPGLEEEEEEEEGKEEEEEREEEEGQGQST). 2 stretches are compositionally biased toward acidic residues: residues 33–43 (ADEEEEAEEEA) and 51–72 (LEEEEEEEEGKEEEEEREEEEG). The chain crosses the membrane as a helical; Signal-anchor for type II membrane protein span at residues 110–130 (LILVIYFFFYASLAAVITLFI). Residues 131 to 356 (YMLFLAISPY…RIIFTLNIET (226 aa)) are Perinuclear space-facing.

Belongs to the X(+)/potassium ATPases subunit beta family. Does not associate with known Na,K-ATPase alpha-subunits. Associates with a SMAD7-transcriptional complex. Interacts with SNW1 and TOR1AIP1. Expressed in perinatal myocytes (at protein level). Expressed during postnatal development in skeletal muscle and heart.

It localises to the nucleus inner membrane. Functionally, may act as a transcriptional coregulator during muscle development through its interaction with SNW1. Has lost its ancestral function as a Na,K-ATPase beta-subunit. The chain is Protein ATP1B4 (Atp1b4) from Rattus norvegicus (Rat).